A 332-amino-acid chain; its full sequence is MKHYHQHYSSFWPKLEEARLGHWQNALEAALETALDPDANGNLPKWLPALETVMAFPSSDSAELSQSAIKAHSQPFSEDDKEKLTQALKAFMPWRKGPFEIEGIYIDTEWHSDWKWDRVSPHLSSLKGRKVLDIGCGSGYHLWRMLGDGAELALGVDPGLLFMTQFLAIKHFVGESLPAYFLPLTLEQLPKTQPSEVFDTVFSMGVLYHRRSPIDHIMDLKRYLKPGGELVLETLVIPDAQGQLLVPKERYAQMNNVWFIPSVQELGHWLEKCGFKNVRCVDLDQTSVKEQRTTEWMNWNSLADFLDPNDSNKTIEGYSAPLRAVMIADKPC.

Carboxy-S-adenosyl-L-methionine contacts are provided by residues K96, W110, K115, G135, L186 to E187, M204, Y208, and R323.

The protein belongs to the class I-like SAM-binding methyltransferase superfamily. CmoB family. Homotetramer.

It catalyses the reaction carboxy-S-adenosyl-L-methionine + 5-hydroxyuridine(34) in tRNA = 5-carboxymethoxyuridine(34) in tRNA + S-adenosyl-L-homocysteine + H(+). Its function is as follows. Catalyzes carboxymethyl transfer from carboxy-S-adenosyl-L-methionine (Cx-SAM) to 5-hydroxyuridine (ho5U) to form 5-carboxymethoxyuridine (cmo5U) at position 34 in tRNAs. The protein is tRNA U34 carboxymethyltransferase of Hydrogenovibrio crunogenus (strain DSM 25203 / XCL-2) (Thiomicrospira crunogena).